The primary structure comprises 429 residues: Histidine--tRNA ligase (429 aa).

This sequence belongs to the class-II aminoacyl-tRNA synthetase family. In terms of assembly, homodimer.

The protein localises to the cytoplasm. The enzyme catalyses tRNA(His) + L-histidine + ATP = L-histidyl-tRNA(His) + AMP + diphosphate + H(+). The sequence is that of Histidine--tRNA ligase from Chlorobium phaeobacteroides (strain DSM 266 / SMG 266 / 2430).